Consider the following 386-residue polypeptide: F420 non-reducing hydrogenase II small subunit (386 aa).

Positions 1 to 51 form a signal peptide, tat-type signal; it reads MVEMSTGMKNLTRTLESMDFLKMDRRTFMKAVSALGATAFLGTYQTEIVNA. Positions 67, 70, 178, 227, 273, 276, 296, and 302 each coordinate [4Fe-4S] cluster. [3Fe-4S] cluster-binding residues include cysteine 311, cysteine 330, and cysteine 333.

This sequence belongs to the [NiFe]/[NiFeSe] hydrogenase small subunit family. As to quaternary structure, composed of a large subunit (VhtA), a small subunit (VhtG) and a cytochrome subunit (VhtC). [4Fe-4S] cluster is required as a cofactor. It depends on [3Fe-4S] cluster as a cofactor. In terms of processing, predicted to be exported by the Tat system. The position of the signal peptide cleavage has not been experimentally proven.

Its subcellular location is the cell membrane. It carries out the reaction methanophenazine + H2 = dihydromethanophenazine. Its function is as follows. Part of the F420 non-reducing hydrogenase II complex that catalyzes the reduction of methanophenazine to dihydromethanophenazine. The chain is F420 non-reducing hydrogenase II small subunit from Methanosarcina mazei (strain ATCC BAA-159 / DSM 3647 / Goe1 / Go1 / JCM 11833 / OCM 88) (Methanosarcina frisia).